A 322-amino-acid polypeptide reads, in one-letter code: Probable heme-iron transport system permease protein IsdF (322 aa).

The next 9 membrane-spanning stretches (helical) occupy residues 9-29, 61-81, 89-109, 114-134, 143-163, 179-199, 233-253, 267-287, and 294-314; these read LLFL…FVTG, ILIA…LQAA, ANII…MLFI, FYLP…IILL, VSMI…LEIL, IWSD…LTLL, VFLA…GIIV, VLIP…DLLG, and LEIP…IYLI.

This sequence belongs to the binding-protein-dependent transport system permease family. FecCD subfamily.

Its subcellular location is the cell membrane. Functionally, part of the binding-protein-dependent transport system for heme-iron. Responsible for the translocation of the substrate across the membrane. This chain is Probable heme-iron transport system permease protein IsdF (isdF), found in Staphylococcus aureus (strain MSSA476).